Reading from the N-terminus, the 301-residue chain is UDP-3-O-acyl-N-acetylglucosamine deacetylase (301 aa).

Zn(2+)-binding residues include histidine 81, histidine 237, and aspartate 241. The active-site Proton donor is the histidine 264.

It belongs to the LpxC family. Zn(2+) is required as a cofactor.

It catalyses the reaction a UDP-3-O-[(3R)-3-hydroxyacyl]-N-acetyl-alpha-D-glucosamine + H2O = a UDP-3-O-[(3R)-3-hydroxyacyl]-alpha-D-glucosamine + acetate. The protein operates within glycolipid biosynthesis; lipid IV(A) biosynthesis; lipid IV(A) from (3R)-3-hydroxytetradecanoyl-[acyl-carrier-protein] and UDP-N-acetyl-alpha-D-glucosamine: step 2/6. Its function is as follows. Catalyzes the hydrolysis of UDP-3-O-myristoyl-N-acetylglucosamine to form UDP-3-O-myristoylglucosamine and acetate, the committed step in lipid A biosynthesis. The protein is UDP-3-O-acyl-N-acetylglucosamine deacetylase of Leptospira borgpetersenii serovar Hardjo-bovis (strain JB197).